A 228-amino-acid polypeptide reads, in one-letter code: MQKLKQQVFEANMDLPRYGLVTFTWGNVSTIDRERGLVVIKPSGVAYETMKADDMVVVDMSGKVVEGEYRPSSDTATHLELYRRYPSLGGIVHTHSTHATAWAQAGLAIPALGTTHADYFFGDIPCTRGLSEEEVQGEYELNTGKVIIETLGNAEPLHTPGIVVYQHGPFAWGKDAHDAVHNAVVMEEVAKMAWIARGINPQLNHIDSYLMNKHFMRKHGPNAYYGQK.

Substrate contacts are provided by residues 26 to 27 (GN), 43 to 44 (SG), and 72 to 73 (SS). Residues D74, H93, and H95 each coordinate Zn(2+). D118 functions as the Proton donor/acceptor in the catalytic mechanism. Residue H167 participates in Zn(2+) binding. The active-site Proton donor/acceptor is the Y225.

This sequence belongs to the aldolase class II family. AraD/FucA subfamily. Requires Zn(2+) as cofactor.

The catalysed reaction is L-ribulose 5-phosphate = D-xylulose 5-phosphate. The protein operates within cofactor degradation; L-ascorbate degradation; D-xylulose 5-phosphate from L-ascorbate: step 4/4. Catalyzes the isomerization of L-ribulose 5-phosphate to D-xylulose 5-phosphate. Is involved in the anaerobic L-ascorbate utilization. The protein is L-ribulose-5-phosphate 4-epimerase UlaF of Escherichia coli O17:K52:H18 (strain UMN026 / ExPEC).